Here is a 137-residue protein sequence, read N- to C-terminus: MMIDNISNFDKVRAVVVAILLYIFIILVVDGSISSLIGKYITYPSDEYHIIEFYDFIHIIGFLLSLSISTYFSSKDIIKDFAKFFTIFFGITFILGITLFLGLTFFENHIPSMRGYTTLMLFFFLLNLFKKLDKITN.

4 helical membrane-spanning segments follow: residues 14 to 34, 48 to 68, 84 to 104, and 109 to 129; these read AVVVAILLYIFIILVVDGSIS, YHIIEFYDFIHIIGFLLSLSI, FFTIFFGITFILGITLFLGLT, and HIPSMRGYTTLMLFFFLLNLF.

The protein resides in the cell membrane. This is an uncharacterized protein from Methanocaldococcus jannaschii (strain ATCC 43067 / DSM 2661 / JAL-1 / JCM 10045 / NBRC 100440) (Methanococcus jannaschii).